Consider the following 553-residue polypeptide: Keratin, type II cytoskeletal 73 (553 aa).

Residues 1–130 form a head region; that stretch reads MNRQFTCKSG…DPEIQKVRAQ (130 aa). A coil 1A region spans residues 131–166; that stretch reads EREQIKALNNKFASFIDKVRFLEQQNQVLQTKWELL. The IF rod domain maps to 131–444; it reads EREQIKALNN…KLLEGEECRM (314 aa). Residues 167–185 are linker 1; the sequence is QQLDLSNCRRNLEPVYEAH. The segment at 186 to 277 is coil 1B; that stretch reads ISSLQKQLDS…CLYEGEITQM (92 aa). The tract at residues 278-301 is linker 12; sequence QSHISDTSVVLSMDNNRNLDLDSI. A coil 2 region spans residues 302–440; the sequence is IAEVRAQYED…ATYRKLLEGE (139 aa). Residues 441–539 are tail; the sequence is ECRMSGEHTN…LGSPSKKTMR (99 aa).

This sequence belongs to the intermediate filament family. In terms of assembly, heterotetramer of two type I and two type II keratins.

In terms of biological role, has a role in hair formation. Specific component of keratin intermediate filaments in the inner root sheath (IRS) of the hair follicle. The chain is Keratin, type II cytoskeletal 73 (Krt73) from Rattus norvegicus (Rat).